We begin with the raw amino-acid sequence, 155 residues long: SsrA-binding protein (155 aa).

It belongs to the SmpB family.

It is found in the cytoplasm. Required for rescue of stalled ribosomes mediated by trans-translation. Binds to transfer-messenger RNA (tmRNA), required for stable association of tmRNA with ribosomes. tmRNA and SmpB together mimic tRNA shape, replacing the anticodon stem-loop with SmpB. tmRNA is encoded by the ssrA gene; the 2 termini fold to resemble tRNA(Ala) and it encodes a 'tag peptide', a short internal open reading frame. During trans-translation Ala-aminoacylated tmRNA acts like a tRNA, entering the A-site of stalled ribosomes, displacing the stalled mRNA. The ribosome then switches to translate the ORF on the tmRNA; the nascent peptide is terminated with the 'tag peptide' encoded by the tmRNA and targeted for degradation. The ribosome is freed to recommence translation, which seems to be the essential function of trans-translation. This Lawsonia intracellularis (strain PHE/MN1-00) protein is SsrA-binding protein.